The sequence spans 253 residues: Trypsin beta (253 aa).

The signal sequence occupies residues 1–22 (MLKFVILLSAVACALGGTIPEG). A propeptide spans 23–30 (LLPQLDGR) (activation peptide). The 223-residue stretch at 31–253 (IVGGTATTIS…DLRSWVINNA (223 aa)) folds into the Peptidase S1 domain. Cys56 and Cys72 are disulfide-bonded. Residues His71 and Asp116 each act as charge relay system in the active site. Intrachain disulfides connect Cys180–Cys197 and Cys206–Cys230. Ser210 (charge relay system) is an active-site residue.

This sequence belongs to the peptidase S1 family.

It localises to the secreted. It is found in the extracellular space. The enzyme catalyses Preferential cleavage: Arg-|-Xaa, Lys-|-Xaa.. The polypeptide is Trypsin beta (betaTry) (Drosophila erecta (Fruit fly)).